A 358-amino-acid chain; its full sequence is DNA integrity scanning protein DisA (358 aa).

The DAC domain maps to 9 to 147 (KQDLSEILQF…ENMKYILKDI (139 aa)). Residues G76, L94, and 107 to 111 (MRHRT) each bind ATP.

The protein belongs to the DisA family. Homooctamer. Mg(2+) is required as a cofactor.

It carries out the reaction 2 ATP = 3',3'-c-di-AMP + 2 diphosphate. Functionally, participates in a DNA-damage check-point that is active prior to asymmetric division when DNA is damaged. DisA forms globular foci that rapidly scan along the chromosomes during sporulation, searching for lesions. When a lesion is present, DisA pauses at the lesion site. This triggers a cellular response that culminates in a temporary block in sporulation initiation. Also has diadenylate cyclase activity, catalyzing the condensation of 2 ATP molecules into cyclic di-AMP (c-di-AMP). c-di-AMP acts as a signaling molecule that couples DNA integrity with progression of sporulation. The rise in c-di-AMP level generated by DisA while scanning the chromosome, operates as a positive signal that advances sporulation; upon encountering a lesion, the DisA focus arrests at the damaged site and halts c-di-AMP synthesis. The polypeptide is DNA integrity scanning protein DisA (Bacillus licheniformis (strain ATCC 14580 / DSM 13 / JCM 2505 / CCUG 7422 / NBRC 12200 / NCIMB 9375 / NCTC 10341 / NRRL NRS-1264 / Gibson 46)).